The sequence spans 347 residues: SUMO-activating enzyme subunit 1 (347 aa).

Belongs to the ubiquitin-activating E1 family. As to quaternary structure, heterodimer of sae1 and uba2/sae2. The heterodimer corresponds to the two domains that are encoded on a single polypeptide chain in ubiquitin-activating enzyme E1. Interacts with ube2i.

Its subcellular location is the nucleus. It participates in protein modification; protein sumoylation. Its function is as follows. The heterodimer acts as an E1 ligase for sumo1, sumo2, and sumo3. It mediates ATP-dependent activation of sumo proteins followed by formation of a thioester bond between a sumo protein and a conserved active site cysteine residue on uba2/sae2. The protein is SUMO-activating enzyme subunit 1 (sae1) of Xenopus tropicalis (Western clawed frog).